The following is a 291-amino-acid chain: Probable aquaporin PIP2-4 (291 aa).

Met1 carries the post-translational modification N-acetylmethionine. Positions 1–22 (MAKDLDVNESGPPAARDYKDPP) are disordered. At Ala2 the chain carries N-acetylalanine; in Probable aquaporin PIP2-4, N-terminally processed. Residues 2 to 39 (AKDLDVNESGPPAARDYKDPPPAPFFDMEELRKWPLYR) are Cytoplasmic-facing. Lys3 is modified (N6,N6-dimethyllysine). The helical transmembrane segment at 40–60 (AVIAEFVATLLFLYVSILTVI) threads the bilayer. The Extracellular segment spans residues 61–74 (GYKAQTDATAGGVD). The chain crosses the membrane as a helical span at residues 75 to 95 (CGGVGILGIAWAFGGMIFVLV). The Cytoplasmic portion of the chain corresponds to 96–125 (YCTAGISGGHINPAVTVGLFLARKVSLVRT). Residues 107-109 (NPA) carry the NPA 1 motif. Residues 126-146 (VLYIVAQCLGAICGCGFVKAF) traverse the membrane as a helical segment. At 147–167 (QSSYYTRYGGGANELADGYNK) the chain is on the extracellular side. Residues 168–188 (GTGLGAEIIGTFVLVYTVFSA) traverse the membrane as a helical segment. Topologically, residues 189 to 201 (TDPKRNARDSHVP) are cytoplasmic. A helical membrane pass occupies residues 202 to 222 (VLAPLPIGFAVFMVHLATIPI). The Extracellular portion of the chain corresponds to 223–249 (TGTGINPARSFGAAVIYNNEKAWDDQW). The short motif at 228–230 (NPA) is the NPA 2 element. Residues 250 to 270 (IFWVGPMIGAAAAAFYHQFIL) form a helical membrane-spanning segment. At 271 to 291 (RAAAIKALGSFGSFGSFRSFA) the chain is on the cytoplasmic side. Phosphoserine is present on residues Ser283, Ser286, and Ser289.

It belongs to the MIP/aquaporin (TC 1.A.8) family. PIP (TC 1.A.8.11) subfamily. As to expression, expressed in roots.

The protein resides in the cell membrane. Its function is as follows. Aquaporins facilitate the transport of water and small neutral solutes across cell membranes. This is Probable aquaporin PIP2-4 (PIP2-4) from Arabidopsis thaliana (Mouse-ear cress).